The following is a 528-amino-acid chain: Calcium-dependent protein kinase 4 (528 aa).

Positions Met-1–Ser-36 are disordered. The N-myristoyl glycine moiety is linked to residue Gly-2. Residues Glu-14 to Leu-23 are compositionally biased toward basic residues. The region spanning Lys-71–Lys-329 is the Protein kinase domain. ATP is bound by residues Leu-76–Val-84 and Lys-99. The active-site Proton acceptor is Asp-193. Positions Asn-350–Gln-358 match the J domain autoinhibitory motif motif. Residues Asn-350–Lys-386 are j domain. A J domain EF-hand interaction motif motif is present at residues Lys-359–Met-368. 4 EF-hand domains span residues Asp-376–Leu-411, Glu-427–Leu-458, Leu-459–Ser-494, and Glu-496–Tyr-528. Ca(2+) contacts are provided by Asp-389, Asn-391, Asp-393, Gln-395, Glu-400, Asp-436, Asp-438, Asn-440, Tyr-442, Glu-447, Asp-472, Asp-474, Ser-476, Lys-478, Glu-483, Asp-506, Asn-508, Asp-510, Glu-512, and Glu-517.

Belongs to the protein kinase superfamily. Ser/Thr protein kinase family. CDPK subfamily. In terms of assembly, may interact with the pre-replication MCM complex prior male gametogenesis activation. Mg(2+) serves as cofactor. Myristoylated; myristoylation may target it to different subcellular compartments. During male gametogenesis, myristoylation is required to initiate DNA replication but not for mitotic spindle assembly or axoneme activation. In terms of processing, not palmitoylated. Post-translationally, may be autophosphorylated on Thr-234 in vitro.

The protein resides in the cytoplasm. It is found in the cell membrane. It catalyses the reaction L-seryl-[protein] + ATP = O-phospho-L-seryl-[protein] + ADP + H(+). The enzyme catalyses L-threonyl-[protein] + ATP = O-phospho-L-threonyl-[protein] + ADP + H(+). Activated by calcium. Upon calcium binding to the EF-hand domains, the C-terminus of the junction domain (J domain) undergoes a conformational change which results in the dissociation of the pseudo-substrate inhibitory motif from the catalytic domain. This, in turn, may facilitate the autophosphorylation of the activation loop at Thr-234, which leads to the kinase activation. Intracellular calcium increase is triggered by xanthurenic acid (XA), a small mosquito molecule that induces the differentiation of specialized transmission stages, the gametocytes, into male and female gametes. Activated by a decrease in temperature (20 degrees Celsius) and an increase in pH (7.6) occurring when the parasite is ingested by in the mosquito. Functionally, calcium-dependent protein kinase which acts as a sensor and effector of intracellular Ca(2+) levels probably in part downstream of cGMP-activated PKG kinase. Plays a central role in the host erythrocytes and hepatocytes infection cycles, sexual reproduction and mosquito transmission of the parasite. During the liver stage, involved in sporozoite motility and thus in sporozoite invasion of host hepatocytes, probably together with CDPK1 and CDPK5. Involved in merosome egress from host hepatocytes, probably together with CDPK5. During the asexual blood stage, involved in merozoite invasion of host erythrocytes and motility by stabilizing the inner membrane complex, a structure below the plasma membrane which acts as an anchor for the glidosome, an acto-myosin motor. Required for cell cycle progression in the male gametocyte. During male gametogenesis in the mosquito gut, required to initiate the first round of DNA replication, probably by facilitating the assembly of the pre-replicative MCM complex, to assemble the first mitotic spindle and, at the end of gametogenesis, to initiate axoneme motility, cytokinesis and subsequent exflagellation. For each of these steps, may phosphorylate SOC1, SOC2 and SOC3, respectively. Together with CDPK1, regulates ookinete gliding in the mosquito host midgut. The protein is Calcium-dependent protein kinase 4 of Plasmodium falciparum (isolate 3D7).